Consider the following 324-residue polypeptide: Viral cathepsin (324 aa).

The first 16 residues, Met-1–Cys-16, serve as a signal peptide directing secretion. The propeptide at Ala-17–Gly-113 is activation peptide. Intrachain disulfides connect Cys-134-Cys-175, Cys-168-Cys-208, and Cys-263-Cys-311. Cys-137 is a catalytic residue. N-linked (GlcNAc...) asparagine; by host glycosylation is present at Asn-159. Residues His-270 and Asn-290 contribute to the active site.

The protein belongs to the peptidase C1 family. In terms of processing, synthesized as an inactive proenzyme and activated by proteolytic removal of the inhibitory propeptide.

It catalyses the reaction Endopeptidase of broad specificity, hydrolyzing substrates of both cathepsin L and cathepsin B.. Its function is as follows. Cysteine protease that plays an essential role in host liquefaction to facilitate horizontal transmission of the virus. May participate in the degradation of foreign protein expressed by the baculovirus system. The chain is Viral cathepsin (Vcath) from Choristoneura fumiferana nuclear polyhedrosis virus (CfMNPV).